Here is a 781-residue protein sequence, read N- to C-terminus: Coiled-coil and C2 domain-containing protein 1-like (781 aa).

5 disordered regions span residues 32-63 (MGRV…NVPG), 94-134 (ELNG…APNS), 187-296 (ESEI…AKES), 313-373 (CSAD…TEGN), and 403-447 (GELP…VEGK). Positions 37–59 (RPAAPARGAPPAARGRPAPAAPA) are enriched in low complexity. Gly residues predominate over residues 98–107 (LVGGGGGGGA). Over residues 108–118 (APTVPTRAAPR) the composition is skewed to low complexity. Composition is skewed to pro residues over residues 119–129 (APGPSGPPPSA) and 204–222 (PLPP…PAPP). A compositionally biased stretch (low complexity) spans 244–256 (APAPTAAAPPATK). Residues 269 to 280 (ILHHRRDLHKQN) show a composition bias toward basic residues. Residues 285–296 (IADKDKESAKES) are compositionally biased toward basic and acidic residues. Pro residues predominate over residues 324–341 (PPSPPPYRKPAPPQPQAP). Residues 363-373 (KMAEKAKTEGN) are compositionally biased toward basic and acidic residues. Residues 605–741 (YEMRQIPSAD…EHSAEMEESL (137 aa)) form the C2 domain.

The protein belongs to the CC2D1 family.

In Caenorhabditis elegans, this protein is Coiled-coil and C2 domain-containing protein 1-like.